Here is a 953-residue protein sequence, read N- to C-terminus: Glycine dehydrogenase (decarboxylating) (953 aa).

Lys705 bears the N6-(pyridoxal phosphate)lysine mark.

The protein belongs to the GcvP family. In terms of assembly, the glycine cleavage system is composed of four proteins: P, T, L and H. Requires pyridoxal 5'-phosphate as cofactor.

The enzyme catalyses N(6)-[(R)-lipoyl]-L-lysyl-[glycine-cleavage complex H protein] + glycine + H(+) = N(6)-[(R)-S(8)-aminomethyldihydrolipoyl]-L-lysyl-[glycine-cleavage complex H protein] + CO2. The glycine cleavage system catalyzes the degradation of glycine. The P protein binds the alpha-amino group of glycine through its pyridoxal phosphate cofactor; CO(2) is released and the remaining methylamine moiety is then transferred to the lipoamide cofactor of the H protein. The protein is Glycine dehydrogenase (decarboxylating) of Sodalis glossinidius (strain morsitans).